Here is a 382-residue protein sequence, read N- to C-terminus: MSLNVFWFLPTHGDGHYLGSTEGARSVDYGYLQQIAQAADRLGFGGVLIPTGRSCEDSWLVAASLIPVTQRLKFLVALRPGIISPTLAARQAATLDRLSNGRALFNLVTGGDPDELAAEGLHLNHEERYEASAEFTHIWRKVLEGETVDFNGKHIQVKGAKLLYPPVQQPRPPLYFGGSSAAAQDLAADQVEMYLTWGEPPAQVKEKIAEVRAKAAAKGRQVRFGIRLHVIVRETTEEAWRAADRLIANLDEKTIADAQQAFARFDSVGQQRMAALHGGKKDNLEISPNLWAGVGLVRGGAGTALVGDGPTVAARMQEYADLGIDTFILSGYPHLEEAYRVGELLFPHLDLVENQAPAPRRPAKAQGEVVANIYIPQKASQS.

This sequence belongs to the SsuD family. As to quaternary structure, homotetramer.

The enzyme catalyses an alkanesulfonate + FMNH2 + O2 = an aldehyde + FMN + sulfite + H2O + 2 H(+). Its function is as follows. Catalyzes the desulfonation of aliphatic sulfonates. This Serratia proteamaculans (strain 568) protein is Alkanesulfonate monooxygenase.